Here is a 764-residue protein sequence, read N- to C-terminus: 1,4-alpha-glucan branching enzyme GlgB (764 aa).

The active-site Nucleophile is the Asp-431. Glu-484 acts as the Proton donor in catalysis.

It belongs to the glycosyl hydrolase 13 family. GlgB subfamily. In terms of assembly, monomer.

It carries out the reaction Transfers a segment of a (1-&gt;4)-alpha-D-glucan chain to a primary hydroxy group in a similar glucan chain.. It functions in the pathway glycan biosynthesis; glycogen biosynthesis. Catalyzes the formation of the alpha-1,6-glucosidic linkages in glycogen by scission of a 1,4-alpha-linked oligosaccharide from growing alpha-1,4-glucan chains and the subsequent attachment of the oligosaccharide to the alpha-1,6 position. This is 1,4-alpha-glucan branching enzyme GlgB from Synechococcus sp. (strain CC9902).